The sequence spans 222 residues: Phosphoenolpyruvate guanylyltransferase (222 aa).

Residues T147, G163, and S166 each contribute to the phosphoenolpyruvate site.

Belongs to the CofC family.

The enzyme catalyses phosphoenolpyruvate + GTP + H(+) = enolpyruvoyl-2-diphospho-5'-guanosine + diphosphate. Its pathway is cofactor biosynthesis; coenzyme F420 biosynthesis. In terms of biological role, guanylyltransferase that catalyzes the activation of phosphoenolpyruvate (PEP) as enolpyruvoyl-2-diphospho-5'-guanosine, via the condensation of PEP with GTP. It is involved in the biosynthesis of coenzyme F420, a hydride carrier cofactor. This Streptosporangium roseum (strain ATCC 12428 / DSM 43021 / JCM 3005 / KCTC 9067 / NCIMB 10171 / NRRL 2505 / NI 9100) protein is Phosphoenolpyruvate guanylyltransferase.